A 312-amino-acid chain; its full sequence is Acetyl-coenzyme A carboxylase carboxyl transferase subunit alpha (312 aa).

The CoA carboxyltransferase C-terminal domain occupies 36-286 (NLEKEISKTY…ADYVKKSLNE (251 aa)).

The protein belongs to the AccA family. In terms of assembly, acetyl-CoA carboxylase is a heterohexamer composed of biotin carboxyl carrier protein (AccB), biotin carboxylase (AccC) and two subunits each of ACCase subunit alpha (AccA) and ACCase subunit beta (AccD).

The protein resides in the cytoplasm. The catalysed reaction is N(6)-carboxybiotinyl-L-lysyl-[protein] + acetyl-CoA = N(6)-biotinyl-L-lysyl-[protein] + malonyl-CoA. It functions in the pathway lipid metabolism; malonyl-CoA biosynthesis; malonyl-CoA from acetyl-CoA: step 1/1. Functionally, component of the acetyl coenzyme A carboxylase (ACC) complex. First, biotin carboxylase catalyzes the carboxylation of biotin on its carrier protein (BCCP) and then the CO(2) group is transferred by the carboxyltransferase to acetyl-CoA to form malonyl-CoA. In Campylobacter jejuni subsp. doylei (strain ATCC BAA-1458 / RM4099 / 269.97), this protein is Acetyl-coenzyme A carboxylase carboxyl transferase subunit alpha.